We begin with the raw amino-acid sequence, 577 residues long: Beta-glucosidase 30 (577 aa).

The N-terminal stretch at 1–23 (MAKGSWFFIILFIISMLENMINS) is a signal peptide. Residues Gln45, His148, and 193–194 (NE) each bind a beta-D-glucoside. Residue Glu194 is the Proton donor of the active site. Cys213 and Cys221 form a disulfide bridge. N-linked (GlcNAc...) asparagine glycosylation occurs at Asn328. Residue Tyr338 participates in a beta-D-glucoside binding. The N-linked (GlcNAc...) asparagine glycan is linked to Asn368. A beta-D-glucoside is bound by residues Glu410, Trp460, 467-468 (EW), and Phe476. The Nucleophile role is filled by Glu410. N-linked (GlcNAc...) asparagine glycans are attached at residues Asn524 and Asn544.

This sequence belongs to the glycosyl hydrolase 1 family.

The catalysed reaction is Hydrolysis of terminal, non-reducing beta-D-glucosyl residues with release of beta-D-glucose.. The protein is Beta-glucosidase 30 of Arabidopsis thaliana (Mouse-ear cress).